Here is a 231-residue protein sequence, read N- to C-terminus: Large ribosomal subunit protein uL1 (231 aa).

The protein belongs to the universal ribosomal protein uL1 family. Part of the 50S ribosomal subunit.

Functionally, binds directly to 23S rRNA. The L1 stalk is quite mobile in the ribosome, and is involved in E site tRNA release. Protein L1 is also a translational repressor protein, it controls the translation of the L11 operon by binding to its mRNA. The polypeptide is Large ribosomal subunit protein uL1 (Macrococcus caseolyticus (strain JCSC5402) (Macrococcoides caseolyticum)).